We begin with the raw amino-acid sequence, 1651 residues long: Roundabout homolog 1 (1651 aa).

The signal sequence occupies residues 1–25 (MKWKHLPLLVMISLLTLSKKHLLLA). At 26–897 (QLIPDPEDLE…QQISDVVKQP (872 aa)) the chain is on the extracellular side. The interval 31–66 (PEDLERGNDNGTPAPTSDNDDNSLGYTGSRLRQEDF) is disordered. Positions 39 to 56 (DNGTPAPTSDNDDNSLGY) are enriched in polar residues. Ig-like C2-type domains follow at residues 68–164 (PRIV…ASLE), 170–257 (DDFR…ADVT), 262–346 (PSFV…ATLT), 351–446 (PHFV…LEVT), and 455–541 (PVIR…AYIE). An intrachain disulfide couples Cys89 to Cys147. Asn160 carries an N-linked (GlcNAc...) asparagine glycan. 3 cysteine pairs are disulfide-bonded: Cys191–Cys240, Cys283–Cys330, and Cys372–Cys428. Asn463 carries N-linked (GlcNAc...) asparagine glycosylation. A disulfide bridge connects residues Cys476 and Cys525. Fibronectin type-III domains are found at residues 563–657 (APSK…TQDV), 676–773 (VVLH…TLEE), and 778–874 (PPRS…LDSH). Residues Asn790, Asn820, and Asn827 are each glycosylated (N-linked (GlcNAc...) asparagine). A helical transmembrane segment spans residues 898–918 (AFIAGIGAACWIILMVFSIWL). Topologically, residues 919–1651 (YRHRKKRNGL…NNEELEETES (733 aa)) are cytoplasmic. A Phosphoserine modification is found at Ser940. A Phosphothreonine modification is found at Thr948. Tyr1038 carries the phosphotyrosine modification. Ser1055 is subject to Phosphoserine. Tyr1073 carries the phosphotyrosine modification. The segment at 1086 to 1107 (NMNNGGGDSSEKHWKPPGQQKQ) is disordered. The residue at position 1114 (Tyr1114) is a Phosphotyrosine. Disordered regions lie at residues 1137–1337 (PYNH…ADME), 1352–1397 (EQTP…DGSF), and 1420–1651 (RRQM…ETES). Over residues 1147-1163 (GGSYNSSDRGSSTSGSQ) the composition is skewed to low complexity. Over residues 1186-1196 (LPPPPAHPPPH) the composition is skewed to pro residues. Phosphothreonine is present on Thr1240. Polar residues predominate over residues 1255-1269 (YSHQSTATLTPSPQE). The segment covering 1281–1293 (DLGHMPHPPDRRR) has biased composition (basic and acidic residues). A compositionally biased stretch (pro residues) spans 1296–1307 (VSPPPPPRPISP). The residue at position 1297 (Ser1297) is a Phosphoserine. Positions 1322-1336 (MDTDAPEEEEDEADM) are enriched in acidic residues. Over residues 1384–1397 (SSGRSSVSSSDGSF) the composition is skewed to low complexity. Polar residues predominate over residues 1438 to 1451 (PRPTSPVSTDSNMS). Positions 1459 to 1470 (RPTKKQKHQPGH) are enriched in basic residues. Positions 1480–1490 (LPPPPVPPPAI) are enriched in pro residues. Basic and acidic residues-rich tracts occupy residues 1516–1541 (ARAD…RQVT) and 1549–1573 (DPRE…RDLP). The segment covering 1592–1601 (FPTSNNPRDP) has biased composition (polar residues). Over residues 1602-1614 (SSSSSMSSRGSGS) the composition is skewed to low complexity. Positions 1642 to 1651 (NNEELEETES) are enriched in acidic residues.

Belongs to the immunoglobulin superfamily. ROBO family. In terms of assembly, homodimer. Dimerization is mediated by the extracellular domain and is independent of SLIT liganding. Interacts with SLIT1. Interacts with SLIT2. Interacts with FLRT3. Interacts with MYO9B (via Rho-GAP domain). In terms of processing, ubiquitinated. May be deubiquitinated by USP33. In terms of tissue distribution, expressed in embryonal brain and spinal cord.

Its subcellular location is the cell membrane. It is found in the cell projection. The protein localises to the axon. The protein resides in the endoplasmic reticulum-Golgi intermediate compartment membrane. In terms of biological role, receptor for SLIT1 and SLIT2 that mediates cellular responses to molecular guidance cues in cellular migration, including axonal navigation at the ventral midline of the neural tube and projection of axons to different regions during neuronal development. Interaction with the intracellular domain of FLRT3 mediates axon attraction towards cells expressing NTN1. In axon growth cones, the silencing of the attractive effect of NTN1 by SLIT2 may require the formation of a ROBO1-DCC complex. Plays a role in the regulation of cell migration via its interaction with MYO9B; inhibits MYO9B-mediated stimulation of RHOA GTPase activity, and thereby leads to increased levels of active, GTP-bound RHOA. May be required for lung development. The chain is Roundabout homolog 1 (Robo1) from Rattus norvegicus (Rat).